A 218-amino-acid polypeptide reads, in one-letter code: Octanoyltransferase (218 aa).

The BPL/LPL catalytic domain occupies 31–206 (EETPDEVWLV…ELVNLLGYEQ (176 aa)). Substrate is bound by residues 70-77 (RGGQVTYH), 137-139 (SLG), and 150-152 (GLA). The active-site Acyl-thioester intermediate is the Cys-168.

This sequence belongs to the LipB family.

It localises to the cytoplasm. It catalyses the reaction octanoyl-[ACP] + L-lysyl-[protein] = N(6)-octanoyl-L-lysyl-[protein] + holo-[ACP] + H(+). Its pathway is protein modification; protein lipoylation via endogenous pathway; protein N(6)-(lipoyl)lysine from octanoyl-[acyl-carrier-protein]: step 1/2. Its function is as follows. Catalyzes the transfer of endogenously produced octanoic acid from octanoyl-acyl-carrier-protein onto the lipoyl domains of lipoate-dependent enzymes. Lipoyl-ACP can also act as a substrate although octanoyl-ACP is likely to be the physiological substrate. In Vibrio vulnificus (strain CMCP6), this protein is Octanoyltransferase.